Here is a 680-residue protein sequence, read N- to C-terminus: Probable Xaa-Pro aminopeptidase P (680 aa).

The Mn(2+) site is built by Asp-477, Asp-488, Glu-586, and Glu-600.

It belongs to the peptidase M24B family. Requires Mn(2+) as cofactor.

The enzyme catalyses Release of any N-terminal amino acid, including proline, that is linked to proline, even from a dipeptide or tripeptide.. In terms of biological role, catalyzes the removal of a penultimate prolyl residue from the N-termini of peptides. This Podospora anserina (strain S / ATCC MYA-4624 / DSM 980 / FGSC 10383) (Pleurage anserina) protein is Probable Xaa-Pro aminopeptidase P (AMPP).